A 787-amino-acid polypeptide reads, in one-letter code: Protein smoothened (787 aa).

The signal sequence occupies residues 1 to 27 (MAAARPARGPELPLLGLLLLLLLGDPG). At 28–233 (RGAASSGNAT…EAEHQDMHSY (206 aa)) the chain is on the extracellular side. Positions 30-60 (AASSGNATGPGPRSAGGSARRSAAVTGPPPP) are disordered. A glycan (N-linked (GlcNAc...) asparagine) is linked at Asn-35. Residues 38–53 (GPGPRSAGGSARRSAA) are compositionally biased toward low complexity. 5 cysteine pairs are disulfide-bonded: Cys-64–Cys-178, Cys-70–Cys-134, Cys-78–Cys-127, Cys-118–Cys-154, and Cys-147–Cys-169. The FZ domain occupies 65–181 (GRAAPCEPLR…DRFPEGCTNE (117 aa)). Position 95 (Asp-95) interacts with cholesterol. A glycan (N-linked (GlcNAc...) asparagine) is linked at Asn-188. Cystine bridges form between Cys-193–Cys-213 and Cys-217–Cys-295. A helical transmembrane segment spans residues 234–254 (IAAFGAVTGLCTLFTLATFVA). The Cytoplasmic portion of the chain corresponds to 255–262 (DWRNSNRY). The chain crosses the membrane as a helical span at residues 263 to 283 (PAVILFYVNACFFVGSIGWLA). The Extracellular portion of the chain corresponds to 284-314 (QFMDGARREIVCRADGTMRLGEPTSNETLSC). Asn-309 is a glycosylation site (N-linked (GlcNAc...) asparagine). Cysteines 314 and 390 form a disulfide. A helical membrane pass occupies residues 315–335 (VIIFVIVYYALMAGVVWFVVL). Residues 336-358 (TYAWHTSFKALGTTYQPLSGKTS) lie on the Cytoplasmic side of the membrane. The helical transmembrane segment at 359-379 (YFHLLTWSLPFVLTVAILAVA) threads the bilayer. The Extracellular segment spans residues 380–402 (QVDGDSVSGICFVGYKNYRYRAG). Cholesterol is bound at residue Tyr-394. Residues 403-423 (FVLAPIGLVLIVGGYFLIRGV) form a helical membrane-spanning segment. Over 424–451 (MTLFSIKSNHPGLLSEKAASKINETMLR) the chain is Cytoplasmic. A helical membrane pass occupies residues 452–472 (LGIFGFLAFGFVLITFSCHFY). Topologically, residues 473–524 (DFFNQAEWERSFRDYVLCQANVTIGLPTKQPIPDCEIKNRPSLLVEKINLFA) are extracellular. Residues Cys-490 and Cys-507 are joined by a disulfide bond. The helical transmembrane segment at 525–545 (MFGTGIAMSTWVWTKATLLIW) threads the bilayer. Positions 538–569 (TKATLLIWRRTWCRLTGQSDDEPKRIKKSKMI) are interaction with BBS5 and BBS7. Over 546–787 (RRTWCRLTGQ…TELMDADSDF (242 aa)) the chain is Cytoplasmic. A phosphoserine mark is found at Ser-556, Ser-574, and Ser-590. The interval 570 to 653 (AKAFSKRHEL…TPVPPEEQAN (84 aa)) is required for interaction with PRKACA. The tract at residues 581 to 593 (QNPGQELSFSMHT) is interaction with DLG5. A Phosphothreonine modification is found at Thr-593. Ser-595 and Ser-638 each carry phosphoserine. Residues Thr-640 and Thr-644 each carry the phosphothreonine modification. Ser-662 is subject to Phosphoserine. The disordered stretch occupies residues 667–704 (KRLGRKKKRRKRKKEVCPLAPPPELHPPAPAPSTIPRL). The segment covering 668–680 (RLGRKKKRRKRKK) has biased composition (basic residues). Pro residues predominate over residues 685–699 (LAPPPELHPPAPAPS).

This sequence belongs to the G-protein coupled receptor Fz/Smo family. In terms of assembly, homodimer. Interacts (via C-terminus) with protein kinase A catalytic subunit PRKACA; interacts with free PRKACA subunits and the interaction leads to sequestration of PRKACA at the membrane, preventing PRKACA-mediated phosphorylation of GLI transcription factors. Interacts with ARRB2. Interacts with KIF7. Interacts with BBS5 and BBS7; the interactions are indicative for the association of SMO with the BBsome complex to facilitate ciliary localization of SMO. Interacts with DLG5 and SDCBP. Interacts with GAS8/DRC4. In terms of processing, phosphorylation by GRK kinases is required for interaction with protein kinase A catalytic subunit PRKACA.

The protein localises to the cell membrane. It localises to the cell projection. The protein resides in the cilium. G protein-coupled receptor which associates with the patched protein (PTCH) to transduce hedgehog protein signaling. Binding of sonic hedgehog (SHH) to its receptor patched prevents inhibition of smoothened (SMO) by patched. When active, SMO binds to and sequesters protein kinase A catalytic subunit PRKACA at the cell membrane, preventing PRKACA-mediated phosphorylation of GLI transcription factors which releases the GLI proteins from PRKACA-mediated inhibition and allows for transcriptional activation of hedgehog pathway target genes. Required for the accumulation of KIF7, GLI2 and GLI3 in the cilia. Interacts with DLG5 at the ciliary base to induce the accumulation of KIF7 and GLI2 at the ciliary tip for GLI2 activation. This Homo sapiens (Human) protein is Protein smoothened (SMO).